Here is a 105-residue protein sequence, read N- to C-terminus: MKKKIRGTKNRPRLCVFRSNKHIYAQIIDDTNNKIIATSSTLVILSEQNKKISNDCHAAHKIGQNIAQKSKALGIKKVIFDRQNKIYHGRIKALAEAVREEGIEF.

Belongs to the universal ribosomal protein uL18 family. As to quaternary structure, part of the 50S ribosomal subunit; contacts the 5S rRNA.

The protein localises to the plastid. The protein resides in the chloroplast. Functionally, binds 5S rRNA, forms part of the central protuberance of the 50S subunit. This chain is Large ribosomal subunit protein uL18c (rpl18), found in Gracilaria tenuistipitata var. liui (Red alga).